The chain runs to 307 residues: Fructose-bisphosphate aldolase (307 aa).

Residue S49 participates in D-glyceraldehyde 3-phosphate binding. D82 (proton donor) is an active-site residue. H83, D104, E134, and H180 together coordinate Zn(2+). G181 contributes to the dihydroxyacetone phosphate binding site. A Zn(2+)-binding site is contributed by H210. Dihydroxyacetone phosphate contacts are provided by residues 211 to 213 and 253 to 256; these read GAS and NTDT.

Belongs to the class II fructose-bisphosphate aldolase family. Homodimer. Zn(2+) serves as cofactor.

The enzyme catalyses beta-D-fructose 1,6-bisphosphate = D-glyceraldehyde 3-phosphate + dihydroxyacetone phosphate. Its pathway is carbohydrate degradation; glycolysis; D-glyceraldehyde 3-phosphate and glycerone phosphate from D-glucose: step 4/4. Catalyzes the aldol condensation of dihydroxyacetone phosphate (DHAP or glycerone-phosphate) with glyceraldehyde 3-phosphate (G3P) to form fructose 1,6-bisphosphate (FBP) in gluconeogenesis and the reverse reaction in glycolysis. The protein is Fructose-bisphosphate aldolase (fba) of Helicobacter pylori (strain ATCC 700392 / 26695) (Campylobacter pylori).